Consider the following 92-residue polypeptide: PqqA binding protein (92 aa).

The protein belongs to the PqqD family. In terms of assembly, monomer. Interacts with PqqE.

Its pathway is cofactor biosynthesis; pyrroloquinoline quinone biosynthesis. Functions as a PqqA binding protein and presents PqqA to PqqE, in the pyrroloquinoline quinone (PQQ) biosynthetic pathway. The chain is PqqA binding protein from Pseudomonas aeruginosa (strain UCBPP-PA14).